Here is a 189-residue protein sequence, read N- to C-terminus: Ribosome maturation factor RimM (189 aa).

Positions 113-189 (DGEYYWVDLL…TIVADWQPDY (77 aa)) constitute a PRC barrel domain.

This sequence belongs to the RimM family. Binds ribosomal protein uS19.

The protein resides in the cytoplasm. In terms of biological role, an accessory protein needed during the final step in the assembly of 30S ribosomal subunit, possibly for assembly of the head region. Essential for efficient processing of 16S rRNA. May be needed both before and after RbfA during the maturation of 16S rRNA. It has affinity for free ribosomal 30S subunits but not for 70S ribosomes. The chain is Ribosome maturation factor RimM from Delftia acidovorans (strain DSM 14801 / SPH-1).